Here is a 128-residue protein sequence, read N- to C-terminus: Iron-sulfur cluster insertion protein ErpA 1 (128 aa).

Residues C47, C111, and C113 each coordinate iron-sulfur cluster.

It belongs to the HesB/IscA family. Homodimer. It depends on iron-sulfur cluster as a cofactor.

Its function is as follows. Required for insertion of 4Fe-4S clusters for at least IspG. This chain is Iron-sulfur cluster insertion protein ErpA 1, found in Methylococcus capsulatus (strain ATCC 33009 / NCIMB 11132 / Bath).